A 240-amino-acid chain; its full sequence is Ribosome maturation protein SDO1 homolog (240 aa).

The protein belongs to the SDO1/SBDS family.

This chain is Ribosome maturation protein SDO1 homolog, found in Methanocaldococcus jannaschii (strain ATCC 43067 / DSM 2661 / JAL-1 / JCM 10045 / NBRC 100440) (Methanococcus jannaschii).